The sequence spans 479 residues: Ribosomal RNA small subunit methyltransferase F (479 aa).

Residues 125–131 (AAAPGSK), Glu149, Asp176, and Asp194 each bind S-adenosyl-L-methionine. Cys247 (nucleophile) is an active-site residue.

This sequence belongs to the class I-like SAM-binding methyltransferase superfamily. RsmB/NOP family.

The protein resides in the cytoplasm. It carries out the reaction cytidine(1407) in 16S rRNA + S-adenosyl-L-methionine = 5-methylcytidine(1407) in 16S rRNA + S-adenosyl-L-homocysteine + H(+). Functionally, specifically methylates the cytosine at position 1407 (m5C1407) of 16S rRNA. This Escherichia coli O17:K52:H18 (strain UMN026 / ExPEC) protein is Ribosomal RNA small subunit methyltransferase F.